An 872-amino-acid polypeptide reads, in one-letter code: uncharacterized protein (872 aa).

The stretch at 496–524 (LQQHHQDISAMQQQILEEKNQLRRATIDV) forms a coiled coil. Disordered regions lie at residues 595 to 736 (RPAV…SVQQ) and 844 to 872 (TKEN…PQAV). Composition is skewed to polar residues over residues 615 to 659 (QNGN…QTTF) and 670 to 686 (PYAS…NNVV). Low complexity predominate over residues 687 to 736 (QQYQSYYDNPSNQQSNQQSNQQSNQQPNQQPNQQPNQQPNQQPNQQSVQQ).

The protein resides in the virion. This is an uncharacterized protein from Acanthamoeba polyphaga mimivirus (APMV).